The sequence spans 183 residues: MLGFVTGVLAISAHVIVSQPNEHSPVVVARETYGLRDVIFRRLRSYETDTASARAEEGTSDIEERSDHEIPPDFYKRLASTSTPYVANLSHKAQIAAQALRKDAERSKGALELLKKYAELEGKMDAPKEEKNHVDRLKAAAFKEWNEKGLNLDQVRVLFADNKRRTSKYENLIEKIVGEYEKS.

Positions 1 to 18 (MLGFVTGVLAISAHVIVS) are cleaved as a signal peptide. Positions 41 to 65 (RRLRSYETDTASARAEEGTSDIEER) match the RxLR-dEER motif. A glycan (N-linked (GlcNAc...) asparagine) is linked at N88.

This sequence belongs to the RxLR effector family.

It localises to the secreted. The protein localises to the host nucleus. It is found in the host cytoplasm. Secreted effector that dos not suppress the host cell death induced by cell death-inducing proteins. This is Secreted RxLR effector protein 41 from Plasmopara viticola (Downy mildew of grapevine).